The following is a 172-amino-acid chain: NADH-ubiquinone oxidoreductase chain 6 (172 aa).

The next 5 helical transmembrane spans lie at 1 to 21 (MTYF…AVAS), 25 to 45 (PYFA…VLVG), 53 to 73 (LVLF…AALA), 86 to 106 (VLGY…IFWG), and 140 to 160 (GGML…VLEL).

The protein belongs to the complex I subunit 6 family.

The protein localises to the mitochondrion membrane. The enzyme catalyses a ubiquinone + NADH + 5 H(+)(in) = a ubiquinol + NAD(+) + 4 H(+)(out). Its function is as follows. Core subunit of the mitochondrial membrane respiratory chain NADH dehydrogenase (Complex I) that is believed to belong to the minimal assembly required for catalysis. Complex I functions in the transfer of electrons from NADH to the respiratory chain. The immediate electron acceptor for the enzyme is believed to be ubiquinone. The polypeptide is NADH-ubiquinone oxidoreductase chain 6 (MT-ND6) (Cyprinus carpio (Common carp)).